The following is a 173-amino-acid chain: Crossover junction endodeoxyribonuclease RuvC (173 aa).

Active-site residues include Asp-8, Glu-67, and Asp-139. Asp-8, Glu-67, and Asp-139 together coordinate Mg(2+).

Belongs to the RuvC family. In terms of assembly, homodimer which binds Holliday junction (HJ) DNA. The HJ becomes 2-fold symmetrical on binding to RuvC with unstacked arms; it has a different conformation from HJ DNA in complex with RuvA. In the full resolvosome a probable DNA-RuvA(4)-RuvB(12)-RuvC(2) complex forms which resolves the HJ. Mg(2+) is required as a cofactor.

It is found in the cytoplasm. It carries out the reaction Endonucleolytic cleavage at a junction such as a reciprocal single-stranded crossover between two homologous DNA duplexes (Holliday junction).. Its function is as follows. The RuvA-RuvB-RuvC complex processes Holliday junction (HJ) DNA during genetic recombination and DNA repair. Endonuclease that resolves HJ intermediates. Cleaves cruciform DNA by making single-stranded nicks across the HJ at symmetrical positions within the homologous arms, yielding a 5'-phosphate and a 3'-hydroxyl group; requires a central core of homology in the junction. The consensus cleavage sequence is 5'-(A/T)TT(C/G)-3'. Cleavage occurs on the 3'-side of the TT dinucleotide at the point of strand exchange. HJ branch migration catalyzed by RuvA-RuvB allows RuvC to scan DNA until it finds its consensus sequence, where it cleaves and resolves the cruciform DNA. This Salmonella choleraesuis (strain SC-B67) protein is Crossover junction endodeoxyribonuclease RuvC.